A 163-amino-acid chain; its full sequence is Secreted RxLR effector protein 135 (163 aa).

An N-terminal signal peptide occupies residues 1 to 20 (MRRLYLFVLILATFLTTSHG). Residues 33 to 45 (RGLQEEAGEDEER) carry the RxLR-dEER motif. Residues 94–127 (KNAGKPKRQTPQIAATGPAKPKVQSPEEAAAVPG) are disordered.

The protein belongs to the RxLR effector family.

Its subcellular location is the secreted. The protein resides in the host nucleus. It localises to the host cytoplasm. Functionally, secreted effector that completely suppresses the host cell death induced by cell death-inducing proteins. This chain is Secreted RxLR effector protein 135, found in Plasmopara viticola (Downy mildew of grapevine).